Reading from the N-terminus, the 388-residue chain is Gastricsin (388 aa).

A signal peptide spans 1 to 16; that stretch reads MKWLLVALVCLHLLEA. The propeptide at 17–59 is activation peptide; it reads AVIKVPLRKFKSIRETLKEKGLLKEFLNTHKYDPALKYRFGDF. One can recognise a Peptidase A1 domain in the interval 73 to 385; the sequence is YFGEISIGTP…DMANNRVGFA (313 aa). The active site involves aspartate 91. Cystine bridges form between cysteine 104–cysteine 109 and cysteine 267–cysteine 271. Aspartate 276 is a catalytic residue. A disulfide bond links cysteine 310 and cysteine 343.

The protein belongs to the peptidase A1 family.

Its subcellular location is the secreted. It carries out the reaction More restricted specificity than pepsin A, but shows preferential cleavage at Tyr-|-Xaa bonds. High activity on hemoglobin.. Functionally, hydrolyzes a variety of proteins. The sequence is that of Gastricsin (PGC) from Oryctolagus cuniculus (Rabbit).